Consider the following 492-residue polypeptide: G2/mitotic-specific cyclin CYB1 (492 aa).

The disordered stretch occupies residues 1-176; the sequence is MPQVTKTNNE…QPEVGERSQS (176 aa). Residues 23 to 33 show a composition bias toward polar residues; sequence QESISTIKNTT. A compositionally biased stretch (low complexity) spans 34–58; that stretch reads ISNSQHKQQTQQQISSPPQVSVTSS. The span at 59–83 shows a compositional bias: polar residues; the sequence is EGVSHVNTRQYLGDVSNQYITNAKP. Positions 111–135 are enriched in low complexity; the sequence is ASDNNNNGSTSSSSNSSNNNNNDAN.

It belongs to the cyclin family. Cyclin AB subfamily.

Essential for the control of the cell cycle at the G2/M (mitosis) transition. Interacts with the CDC2 protein kinase to form MPF. G2/M cyclins accumulate steadily during G2 and are abruptly destroyed at mitosis. In Candida albicans (Yeast), this protein is G2/mitotic-specific cyclin CYB1 (CYB1).